A 131-amino-acid chain; its full sequence is Large ribosomal subunit protein bL12 (131 aa).

The protein belongs to the bacterial ribosomal protein bL12 family. In terms of assembly, homodimer. Part of the ribosomal stalk of the 50S ribosomal subunit. Forms a multimeric L10(L12)X complex, where L10 forms an elongated spine to which 2 to 4 L12 dimers bind in a sequential fashion. Binds GTP-bound translation factors.

Forms part of the ribosomal stalk which helps the ribosome interact with GTP-bound translation factors. Is thus essential for accurate translation. The protein is Large ribosomal subunit protein bL12 of Parasynechococcus marenigrum (strain WH8102).